The sequence spans 261 residues: uncharacterized protein (261 aa).

It belongs to the FwdC/FmdC family.

This is an uncharacterized protein from Methanocaldococcus jannaschii (strain ATCC 43067 / DSM 2661 / JAL-1 / JCM 10045 / NBRC 100440) (Methanococcus jannaschii).